The primary structure comprises 368 residues: Ribosomal RNA large subunit methyltransferase M (368 aa).

S-adenosyl-L-methionine contacts are provided by residues S199, 232-235 (APGG), D251, D271, and D287. K316 serves as the catalytic Proton acceptor.

This sequence belongs to the class I-like SAM-binding methyltransferase superfamily. RNA methyltransferase RlmE family. RlmM subfamily. In terms of assembly, monomer.

The protein localises to the cytoplasm. The catalysed reaction is cytidine(2498) in 23S rRNA + S-adenosyl-L-methionine = 2'-O-methylcytidine(2498) in 23S rRNA + S-adenosyl-L-homocysteine + H(+). In terms of biological role, catalyzes the 2'-O-methylation at nucleotide C2498 in 23S rRNA. The sequence is that of Ribosomal RNA large subunit methyltransferase M from Aromatoleum aromaticum (strain DSM 19018 / LMG 30748 / EbN1) (Azoarcus sp. (strain EbN1)).